Reading from the N-terminus, the 355-residue chain is S-adenosylmethionine:tRNA ribosyltransferase-isomerase (355 aa).

The protein belongs to the QueA family. In terms of assembly, monomer.

The protein localises to the cytoplasm. The enzyme catalyses 7-aminomethyl-7-carbaguanosine(34) in tRNA + S-adenosyl-L-methionine = epoxyqueuosine(34) in tRNA + adenine + L-methionine + 2 H(+). It functions in the pathway tRNA modification; tRNA-queuosine biosynthesis. Its function is as follows. Transfers and isomerizes the ribose moiety from AdoMet to the 7-aminomethyl group of 7-deazaguanine (preQ1-tRNA) to give epoxyqueuosine (oQ-tRNA). The chain is S-adenosylmethionine:tRNA ribosyltransferase-isomerase from Jannaschia sp. (strain CCS1).